The following is a 329-amino-acid chain: Putative dehydrogenase RB0419 (329 aa).

It belongs to the ornithine cyclodeaminase/mu-crystallin family.

This chain is Putative dehydrogenase RB0419, found in Rhizobium meliloti (strain 1021) (Ensifer meliloti).